We begin with the raw amino-acid sequence, 219 residues long: ATP-dependent dethiobiotin synthetase BioD (219 aa).

12–17 (EVGKTY) contributes to the ATP binding site. T16 is a binding site for Mg(2+). K37 is an active-site residue. S41 provides a ligand contact to substrate. ATP-binding positions include D52, 114–117 (EGAG), and 174–175 (NC). Residues D52 and E114 each contribute to the Mg(2+) site.

It belongs to the dethiobiotin synthetase family. Homodimer. Requires Mg(2+) as cofactor.

The protein resides in the cytoplasm. It catalyses the reaction (7R,8S)-7,8-diammoniononanoate + CO2 + ATP = (4R,5S)-dethiobiotin + ADP + phosphate + 3 H(+). It participates in cofactor biosynthesis; biotin biosynthesis; biotin from 7,8-diaminononanoate: step 1/2. Its function is as follows. Catalyzes a mechanistically unusual reaction, the ATP-dependent insertion of CO2 between the N7 and N8 nitrogen atoms of 7,8-diaminopelargonic acid (DAPA, also called 7,8-diammoniononanoate) to form a ureido ring. This Francisella tularensis subsp. holarctica (strain FTNF002-00 / FTA) protein is ATP-dependent dethiobiotin synthetase BioD.